Consider the following 407-residue polypeptide: tRNA-specific 2-thiouridylase MnmA (407 aa).

Residues 20–27 and Leu-46 each bind ATP; that span reads AMSGGVDS. Cys-114 functions as the Nucleophile in the catalytic mechanism. A disulfide bridge connects residues Cys-114 and Cys-210. Gly-138 contributes to the ATP binding site. The tract at residues 160-162 is interaction with tRNA; it reads RDQ. Cys-210 functions as the Cysteine persulfide intermediate in the catalytic mechanism.

This sequence belongs to the MnmA/TRMU family.

The protein resides in the cytoplasm. It carries out the reaction S-sulfanyl-L-cysteinyl-[protein] + uridine(34) in tRNA + AH2 + ATP = 2-thiouridine(34) in tRNA + L-cysteinyl-[protein] + A + AMP + diphosphate + H(+). Catalyzes the 2-thiolation of uridine at the wobble position (U34) of tRNA, leading to the formation of s(2)U34. This is tRNA-specific 2-thiouridylase MnmA from Bartonella tribocorum (strain CIP 105476 / IBS 506).